Reading from the N-terminus, the 143-residue chain is Type II secretion system core protein G (143 aa).

The propeptide at 1–17 is leader sequence; sequence MIKRSITRSPSRAGQAG. Methionine 18 carries the N-methylmethionine modification. Residues 18–38 form a helical membrane-spanning segment; sequence MSLLEIIIVIVLIGAVLTLVG.

It belongs to the GSP G family. Type II secretion system is composed of four main components: the outer membrane complex, the inner membrane complex, the cytoplasmic secretion ATPase and the periplasm-spanning pseudopilus. Forms homomultimers. Interacts with pseudopilin tip complex component XpsJ as well as XpsI and XcpH. Interacts with XpsN and secretin XpsD. Cleaved by the prepilin peptidase. Post-translationally, methylated by prepilin peptidase at the amino group of the N-terminal methionine once the leader sequence is cleaved.

It localises to the cell inner membrane. Core component of the type II secretion system required for the energy-dependent secretion of extracellular factors such as proteases and toxins from the periplasm. Pseudopilin (pilin-like) protein that polymerizes to form the pseudopilus. Further polymerization triggers pseudopilus growth. The chain is Type II secretion system core protein G (xpsG) from Xanthomonas campestris pv. campestris (strain ATCC 33913 / DSM 3586 / NCPPB 528 / LMG 568 / P 25).